Here is a 471-residue protein sequence, read N- to C-terminus: 3-isopropylmalate dehydratase large subunit (471 aa).

Cys351, Cys412, and Cys415 together coordinate [4Fe-4S] cluster.

The protein belongs to the aconitase/IPM isomerase family. LeuC type 1 subfamily. As to quaternary structure, heterodimer of LeuC and LeuD. It depends on [4Fe-4S] cluster as a cofactor.

The enzyme catalyses (2R,3S)-3-isopropylmalate = (2S)-2-isopropylmalate. It functions in the pathway amino-acid biosynthesis; L-leucine biosynthesis; L-leucine from 3-methyl-2-oxobutanoate: step 2/4. Its function is as follows. Catalyzes the isomerization between 2-isopropylmalate and 3-isopropylmalate, via the formation of 2-isopropylmaleate. The sequence is that of 3-isopropylmalate dehydratase large subunit from Hahella chejuensis (strain KCTC 2396).